We begin with the raw amino-acid sequence, 728 residues long: Elongation factor 2 (728 aa).

Residues 18–258 form the tr-type G domain; that stretch reads KFIRNIGIVA…MVIRHLPSPI (241 aa). GTP is bound by residues 27-34, 93-97, and 147-150; these read AHIDHGKT, DTPGH, and NKVD. Histidine 594 is subject to Diphthamide.

The protein belongs to the TRAFAC class translation factor GTPase superfamily. Classic translation factor GTPase family. EF-G/EF-2 subfamily.

The protein localises to the cytoplasm. In terms of biological role, catalyzes the GTP-dependent ribosomal translocation step during translation elongation. During this step, the ribosome changes from the pre-translocational (PRE) to the post-translocational (POST) state as the newly formed A-site-bound peptidyl-tRNA and P-site-bound deacylated tRNA move to the P and E sites, respectively. Catalyzes the coordinated movement of the two tRNA molecules, the mRNA and conformational changes in the ribosome. The sequence is that of Elongation factor 2 (fusA) from Archaeoglobus fulgidus (strain ATCC 49558 / DSM 4304 / JCM 9628 / NBRC 100126 / VC-16).